We begin with the raw amino-acid sequence, 244 residues long: NAD(P)H-quinone oxidoreductase subunit K (244 aa).

Residues Cys-51, Cys-52, Cys-116, and Cys-147 each coordinate [4Fe-4S] cluster.

It belongs to the complex I 20 kDa subunit family. In terms of assembly, NDH-1 can be composed of about 15 different subunits; different subcomplexes with different compositions have been identified which probably have different functions. [4Fe-4S] cluster serves as cofactor.

The protein localises to the cellular thylakoid membrane. The enzyme catalyses a plastoquinone + NADH + (n+1) H(+)(in) = a plastoquinol + NAD(+) + n H(+)(out). It carries out the reaction a plastoquinone + NADPH + (n+1) H(+)(in) = a plastoquinol + NADP(+) + n H(+)(out). Its function is as follows. NDH-1 shuttles electrons from an unknown electron donor, via FMN and iron-sulfur (Fe-S) centers, to quinones in the respiratory and/or the photosynthetic chain. The immediate electron acceptor for the enzyme in this species is believed to be plastoquinone. Couples the redox reaction to proton translocation, and thus conserves the redox energy in a proton gradient. Cyanobacterial NDH-1 also plays a role in inorganic carbon-concentration. This is NAD(P)H-quinone oxidoreductase subunit K from Synechococcus sp. (strain JA-3-3Ab) (Cyanobacteria bacterium Yellowstone A-Prime).